We begin with the raw amino-acid sequence, 100 residues long: MHLTPRESEKLLLHLAGELAAKRKARGLKLNYPETIAYISSHLLEAARDGKSVAELMNYGATLLTRDDVMEGIAEMIHDVQIEATFPDGTKLVTVHSPIR.

The protein belongs to the urease gamma subunit family. In terms of assembly, heterotrimer of UreA (gamma), UreB (beta) and UreC (alpha) subunits. Three heterotrimers associate to form the active enzyme.

Its subcellular location is the cytoplasm. It catalyses the reaction urea + 2 H2O + H(+) = hydrogencarbonate + 2 NH4(+). The protein operates within nitrogen metabolism; urea degradation; CO(2) and NH(3) from urea (urease route): step 1/1. The sequence is that of Urease subunit gamma from Flavobacterium johnsoniae (strain ATCC 17061 / DSM 2064 / JCM 8514 / BCRC 14874 / CCUG 350202 / NBRC 14942 / NCIMB 11054 / UW101) (Cytophaga johnsonae).